The chain runs to 1281 residues: Enterobactin synthase component F (1281 aa).

The segment at 1-301 (MSQHLPLVAA…NVLPLGIHIA (301 aa)) is elongation/condensation. An adenylation region spans residues 486 to 891 (SYREMHEQVV…ALPDVKQAVT (406 aa)). Residues 975–1050 (APKAGSETII…KLATIIDGEE (76 aa)) form the Carrier domain. S1010 carries the O-(pantetheine 4'-phosphoryl)serine modification. The segment at 1070-1281 (PTLFCFHPAS…GPIIRATLNR (212 aa)) is thioesterase. H1259 acts as the Proton acceptor; for thioesterase activity in catalysis.

This sequence belongs to the ATP-dependent AMP-binding enzyme family. EntF subfamily. Proteins EntB, EntD, EntE and EntF are the component of the enterobactin synthase. Components probably do not form a stable complex. EntF acts as a catalytic monomer. The cofactor is pantetheine 4'-phosphate. 4'-phosphopantetheine is transferred from CoA to a specific serine of apo-EntF by EntD. Holo-EntF so formed is then acylated with seryl-AMP.

Its subcellular location is the cytoplasm. The enzyme catalyses 3 2,3-dihydroxybenzoate + 3 L-serine + 6 ATP = enterobactin + 6 AMP + 6 diphosphate + 4 H(+). The catalysed reaction is holo-[peptidyl-carrier protein] + L-serine + ATP = L-seryl-[peptidyl-carrier protein] + AMP + diphosphate. Its pathway is siderophore biosynthesis; enterobactin biosynthesis. In terms of biological role, involved in the biosynthesis of the siderophore enterobactin (enterochelin), which is a macrocyclic trimeric lactone of N-(2,3-dihydroxybenzoyl)-serine. EntF catalyzes the activation of L-serine via ATP-dependent PPi exchange reaction to form seryladenylate. Activated L-serine is loaded onto the peptidyl carrier domain via a thioester linkage to the phosphopanthetheine moiety, forming seryl-S-Ppant-EntF. EntF acts then as the sole catalyst for the formation of the three amide and three ester linkages found in enterobactin, using seryladenylate and 2,3-dihydroxybenzoate-S-Ppant-EntB (DHB-S-Ppant-EntB) as substrates, via the formation of a DHB-Ser-S-Ppant-EntF intermediate. The polypeptide is Enterobactin synthase component F (entF) (Shigella flexneri).